The following is a 614-amino-acid chain: Dihydroxy-acid dehydratase (614 aa).

D81 provides a ligand contact to Mg(2+). C122 provides a ligand contact to [2Fe-2S] cluster. Mg(2+) contacts are provided by D123 and K124. Residue K124 is modified to N6-carboxylysine. [2Fe-2S] cluster is bound at residue C193. E489 is a Mg(2+) binding site. S515 functions as the Proton acceptor in the catalytic mechanism.

The protein belongs to the IlvD/Edd family. Homodimer. [2Fe-2S] cluster is required as a cofactor. Mg(2+) serves as cofactor.

The catalysed reaction is (2R)-2,3-dihydroxy-3-methylbutanoate = 3-methyl-2-oxobutanoate + H2O. It carries out the reaction (2R,3R)-2,3-dihydroxy-3-methylpentanoate = (S)-3-methyl-2-oxopentanoate + H2O. It functions in the pathway amino-acid biosynthesis; L-isoleucine biosynthesis; L-isoleucine from 2-oxobutanoate: step 3/4. Its pathway is amino-acid biosynthesis; L-valine biosynthesis; L-valine from pyruvate: step 3/4. In terms of biological role, functions in the biosynthesis of branched-chain amino acids. Catalyzes the dehydration of (2R,3R)-2,3-dihydroxy-3-methylpentanoate (2,3-dihydroxy-3-methylvalerate) into 2-oxo-3-methylpentanoate (2-oxo-3-methylvalerate) and of (2R)-2,3-dihydroxy-3-methylbutanoate (2,3-dihydroxyisovalerate) into 2-oxo-3-methylbutanoate (2-oxoisovalerate), the penultimate precursor to L-isoleucine and L-valine, respectively. This chain is Dihydroxy-acid dehydratase, found in Saccharophagus degradans (strain 2-40 / ATCC 43961 / DSM 17024).